The primary structure comprises 377 residues: 3-(aryl)acrylate reductase (377 aa).

Residues 121 to 130 (FALTEPGAGS), 154 to 156 (FIT), arginine 266, glutamine 277, and 334 to 338 (QIHGG) each bind FAD. Glutamate 361 acts as the Proton acceptor in catalysis. 363-365 (TSE) contributes to the FAD binding site.

It belongs to the acyl-CoA dehydrogenase family. The cofactor is FAD.

The enzyme catalyses 3-phenylpropanoate + oxidized [electron-transfer flavoprotein] + H(+) = (E)-cinnamate + reduced [electron-transfer flavoprotein]. It carries out the reaction phloretate + oxidized [electron-transfer flavoprotein] + H(+) = (E)-4-coumarate + reduced [electron-transfer flavoprotein]. It catalyses the reaction indole-3-propanoate + oxidized [electron-transfer flavoprotein] + H(+) = (E)-3-(indol-3-yl)acrylate + reduced [electron-transfer flavoprotein]. It functions in the pathway amino-acid degradation. In terms of biological role, essential for the reductive metabolism of L-phenylalanine, L-tyrosine and L-tryptophan. Catalyzes the reduction of phenylacrylic acid to phenylpropionic acid, 4-hydroxy-phenylacrylic acid to 4-hydroxy-phenylpropionic acid, and indoleacrylic acid to indolepropionic acid. The chain is 3-(aryl)acrylate reductase from Clostridium sporogenes (strain ATCC 15579).